The following is a 420-amino-acid chain: MDKLKIEASGALAGNVVISGAKNAALPILMAGVLAETDFNVSNVPNLRDVNTSCELLRCLGAEVTRSGTDKVCISTTNLNEFCAPYDLVKTMRASILILGPLLARYGTADVSLPGGCAIGARPVNLHLQGLEQMGAQIEVQEGYIKARVDGRLKGAHIFMDMISVGATENLLMAASLADGETIIENAAREPEVVDLANCLIAMGAKIEGAGTDTVRIQGVESLQGCDYRVMPDRIETGSFLVAAAVTRGKIRCTKADPKSLEAVLAKLEDAGANITTGDDWIELDMQGKRPKAVNIKTVAYPGFPTDMQAQFCVLNALAEGTATITETIFENRFMHVPELSRMGATMELEGNTCIIHGIERLNGAQVMATDLRASASLVIAGLVAEGTTIVDRIYHLDRGYEHIEDKFKGLGGHVERVKS.

22–23 (KN) is a phosphoenolpyruvate binding site. Residue R93 participates in UDP-N-acetyl-alpha-D-glucosamine binding. Residue C117 is the Proton donor of the active site. C117 carries the 2-(S-cysteinyl)pyruvic acid O-phosphothioketal modification. UDP-N-acetyl-alpha-D-glucosamine contacts are provided by D307 and I329.

It belongs to the EPSP synthase family. MurA subfamily.

The protein resides in the cytoplasm. The catalysed reaction is phosphoenolpyruvate + UDP-N-acetyl-alpha-D-glucosamine = UDP-N-acetyl-3-O-(1-carboxyvinyl)-alpha-D-glucosamine + phosphate. It participates in cell wall biogenesis; peptidoglycan biosynthesis. Functionally, cell wall formation. Adds enolpyruvyl to UDP-N-acetylglucosamine. This chain is UDP-N-acetylglucosamine 1-carboxyvinyltransferase, found in Shewanella pealeana (strain ATCC 700345 / ANG-SQ1).